Consider the following 2669-residue polypeptide: Nucleosome-remodeling factor subunit NURF301 (2669 aa).

Positions 1–12 are enriched in basic residues; the sequence is MSGRGSRKRGRP. The tract at residues 1–121 is required for function in nucleosome sliding; it reads MSGRGSRKRG…EEDKSDNEDD (121 aa). Residues 1-125 form a disordered region; that stretch reads MSGRGSRKRG…SDNEDDMLLT (125 aa). The a.T hook DNA-binding region spans 6–18; it reads SRKRGRPPKTPNE. Residues 38–56 show a composition bias toward polar residues; the sequence is GKSQPSTPSASRGISPQSD. Residues S40, S52, S55, S59, and S62 each carry the phosphoserine modification. Residues 66-82 show a composition bias toward basic residues; sequence HTNRSRGSAAKRGRGRK. The span at 109 to 125 shows a compositional bias: acidic residues; sequence GDSEEDKSDNEDDMLLT. The DDT domain occupies 188 to 248; it reads NTHVLRALSI…LKAILREEDA (61 aa). The PHD-type 1 zinc-finger motif lies at 339–386; it reads DDHCRVCHRLGDLLCCETCPAVYHLECVDPPMNDVPTEDWQCGLCRSH. Residues 460–515 are a coiled coil; the sequence is RLHSQITERRDEIERQMKLTETLTNEHKHTKRSVIEIEQEAKNELLEKEVLDEDEK. The disordered stretch occupies residues 505–538; sequence LEKEVLDEDEKDGDAKSESQSIEGTKKQEECKMV. The segment covering 528-537 has biased composition (basic and acidic residues); the sequence is GTKKQEECKM. Residues 688 to 720 are a coiled coil; it reads LQRITSAEREERKKLEKREKRERDDEEERNRLA. 3 disordered regions span residues 1026 to 1048, 1135 to 1159, and 1406 to 1425; these read EGKR…AESE, TGLN…NQKS, and RSGL…EPQI. Residue S1417 is modified to Phosphoserine. Phosphothreonine is present on T1527. Over residues 1559 to 1590 the composition is skewed to low complexity; sequence SRTGGANTAAAAASPTVGGSTSTQSNPSTSTP. 3 disordered regions span residues 1559–1596, 2181–2203, and 2283–2307; these read SRTG…VQII, INNG…ITTN, and TNEW…QTDD. The span at 2283–2293 shows a compositional bias: polar residues; that stretch reads TNEWETCSRGS. Residues 2338–2373 are a coiled coil; the sequence is KNDEVAELGEQKQSQLERHKELLKKNILRKRSLLER. The segment at 2382 to 2432 is disordered; that stretch reads DVKTKVQRHVRPLSNASPDEQSENERSGEPNLDFKRTEVQNPRHGAGRPKK. 3 positions are modified to phosphoserine: S2395, S2398, and S2403. Over residues 2404 to 2419 the composition is skewed to basic and acidic residues; the sequence is ENERSGEPNLDFKRTE. Residues 2481 to 2546 form a PHD-type 2 zinc finger; it reads EFICIDCKRA…EYVCPECQRK (66 aa). The Bromo domain occupies 2556-2660; that stretch reads KLTSNDVEEL…SYFVQKIKNF (105 aa).

It belongs to the BPTF family. As to quaternary structure, component of the NURF complex composed of Caf1-55, E(bx), Nurf-38 and Iswi. Interacts with Trl. Interacts with histone H3-K4Me3.

The protein resides in the nucleus. Its function is as follows. Histone-binding component of NURF (nucleosome remodeling factor), a complex which catalyzes ATP-dependent nucleosome sliding and facilitates transcription of chromatin. Specifically recognizes H3 tails trimethylated on 'Lys-4' (H3K4me3), which mark transcription start sites of virtually all active genes. Required for homeotic gene expression, proper larval blood cell development, normal male X chromosome morphology, ecdysteroid signaling and metamorphosis. The sequence is that of Nucleosome-remodeling factor subunit NURF301 (E(bx)) from Drosophila melanogaster (Fruit fly).